A 256-amino-acid chain; its full sequence is Undecaprenyl-diphosphatase (256 aa).

7 helical membrane passes run 8 to 28, 41 to 61, 75 to 95, 96 to 116, 175 to 195, 208 to 228, and 236 to 256; these read VLGIVEGISEFLPISSTGHLI, FVKSFEISIQLGSILAVVVLY, IIAAFIPTGIIGFLLYKLIKG, FLIGNDLVVVVSLILGGIILI, AEFSFLLAIPTMFAATTYDLI, ILIIGFITSFITALIVVKWFL, and LKIFGFYRILIGLVYAAFFLF.

This sequence belongs to the UppP family.

Its subcellular location is the cell inner membrane. The catalysed reaction is di-trans,octa-cis-undecaprenyl diphosphate + H2O = di-trans,octa-cis-undecaprenyl phosphate + phosphate + H(+). Catalyzes the dephosphorylation of undecaprenyl diphosphate (UPP). Confers resistance to bacitracin. This chain is Undecaprenyl-diphosphatase, found in Aquifex aeolicus (strain VF5).